We begin with the raw amino-acid sequence, 237 residues long: MSGSDTSGSVHVDEHGHGHGKASSSYDGAGAPAPAPAPFQGHRKAGSGSSDVPFLLRSGGSGGDGLRRCLGLIDFVLRVAAFGPTLAAAISIGTSDERLSVFTNYFQFRARFDDFPAFEFFIVANAIAAGYMVLSLPFSAATIMSSKATGVKLLLLICDTIMVGLLTAAASAAAAMVYVAHEGNLRANWVPICLQFHGFCQRTSGAVIASFLAVFVLMVLIVMAAFTMPRRTHHTAS.

Positions 1-48 (MSGSDTSGSVHVDEHGHGHGKASSSYDGAGAPAPAPAPFQGHRKAGSG) are disordered. The Cytoplasmic segment spans residues 1-69 (MSGSDTSGSV…GSGGDGLRRC (69 aa)). A helical transmembrane segment spans residues 70-90 (LGLIDFVLRVAAFGPTLAAAI). The Extracellular portion of the chain corresponds to 91–117 (SIGTSDERLSVFTNYFQFRARFDDFPA). The chain crosses the membrane as a helical span at residues 118–138 (FEFFIVANAIAAGYMVLSLPF). Topologically, residues 139–152 (SAATIMSSKATGVK) are cytoplasmic. A helical membrane pass occupies residues 153–173 (LLLLICDTIMVGLLTAAASAA). Residues 174-205 (AAMVYVAHEGNLRANWVPICLQFHGFCQRTSG) are Extracellular-facing. The chain crosses the membrane as a helical span at residues 206 to 226 (AVIASFLAVFVLMVLIVMAAF). Residues 227–237 (TMPRRTHHTAS) lie on the Cytoplasmic side of the membrane.

The protein belongs to the Casparian strip membrane proteins (CASP) family. In terms of assembly, homodimer and heterodimers.

The protein localises to the cell membrane. Its function is as follows. Regulates membrane-cell wall junctions and localized cell wall deposition. Required for establishment of the Casparian strip membrane domain (CSD) and the subsequent formation of Casparian strips, a cell wall modification of the root endodermis that determines an apoplastic barrier between the intraorganismal apoplasm and the extraorganismal apoplasm and prevents lateral diffusion. The chain is Casparian strip membrane protein 2 from Oryza sativa subsp. japonica (Rice).